Consider the following 181-residue polypeptide: MKQLLDFIPLIIFFALYKFYDIYVATGALIAATTLQVIVTYAMYKKVEKMQLITFVMVALFGGMTLALHDDNFIKWKVTIVYVVFALGLTISQIMGKPAIKGMLGKELTLPDAVWSTINWAWVMFFSGCAALNLYVAYHLPLDVWVNFKVFGLLAATFVFTLLTGGYIYKHLPHEPKQKNQ.

The next 5 membrane-spanning stretches (helical) occupy residues 10–30 (LIIF…GALI), 50–70 (MQLI…ALHD), 80–100 (IVYV…KPAI), 120–140 (WAWV…AYHL), and 148–168 (FKVF…GGYI).

The protein belongs to the YciB family.

It is found in the cell inner membrane. Its function is as follows. Plays a role in cell envelope biogenesis, maintenance of cell envelope integrity and membrane homeostasis. This chain is Inner membrane-spanning protein YciB, found in Vibrio cholerae serotype O1 (strain ATCC 39541 / Classical Ogawa 395 / O395).